A 72-amino-acid chain; its full sequence is Bowman-Birk type proteinase inhibitor (72 aa).

7 cysteine pairs are disulfide-bonded: cysteine 8–cysteine 61, cysteine 9–cysteine 24, cysteine 12–cysteine 57, cysteine 14–cysteine 22, cysteine 31–cysteine 38, cysteine 35–cysteine 50, and cysteine 40–cysteine 48.

It belongs to the Bowman-Birk serine protease inhibitor family.

Its function is as follows. This inhibitor has two domains, each with separate antiprotease activity. 1 mole of inhibitor inhibits either 1 mole of trypsin or 2 moles of chymotrypsin, stoichiometrically. This Vicia sativa subsp. nigra (Common vetch) protein is Bowman-Birk type proteinase inhibitor.